The sequence spans 205 residues: Molybdenum cofactor guanylyltransferase (205 aa).

GTP is bound by residues 14–16 (LAG), Lys-27, Asp-77, and Asp-107. A Mg(2+)-binding site is contributed by Asp-107.

Belongs to the MobA family. In terms of assembly, monomer. It depends on Mg(2+) as a cofactor.

The protein resides in the cytoplasm. The catalysed reaction is Mo-molybdopterin + GTP + H(+) = Mo-molybdopterin guanine dinucleotide + diphosphate. Transfers a GMP moiety from GTP to Mo-molybdopterin (Mo-MPT) cofactor (Moco or molybdenum cofactor) to form Mo-molybdopterin guanine dinucleotide (Mo-MGD) cofactor. The polypeptide is Molybdenum cofactor guanylyltransferase (Burkholderia vietnamiensis (strain G4 / LMG 22486) (Burkholderia cepacia (strain R1808))).